The chain runs to 1180 residues: MSVKSPFNVMSRNNLEAPPCKMTEPFNFEKNENKLPPHESLRSPGTLPNHPNFRLKSSENGNKKNNFLLCEQTKQYLASQEDNSVSSNPNGINGEVVGSKGDRKKLPAGNSVSPPSAESNSPPKEVNIKPGNNVRPAKSKKLNKLVENSLSISNPGLFTSLGPPLRSTTCHRCGLFGSLRCSQCKQTYYCSTACQRRDWSAHSIVCRPVQPNFHKLENKSSIETKDVEVNNKSDCPLGVTKEIAIWAERIMFSDLRSLQLKKTMEIKGTVTEFKHPGDFYVQLYSSEVLEYMNQLSASLKETYANVHEKDYIPVKGEVCIAKYTVDQTWNRAIIQNVDVQQKKAHVLYIDYGNEEIIPLNRIYHLNRNIDLFPPCAIKCFVANVIPAEGNWSSDCIKATKPLLMEQYCSIKIVDILEEEVVTFAVEVELPNSGKLLDHVLIEMGYGLKPSGQDSKKENADQSDPEDVGKMTTENNIVVDKSDLIPKVLTLNVGDEFCGVVAHIQTPEDFFCQQLQSGRKLAELQASLSKYCDQLPPRSDFYPAIGDICCAQFSEDDQWYRASVLAYASEESVLVGYVDYGNFEILSLMRLCPIIPKLLELPMQAIKCVLAGVKPSLGIWTPEAICLMKKLVQNKIITVKVVDKLENSSLVELIDKSETPHVSVSKVLLDAGFAVGEQSMVTDKPSDVKETSVPLGVEGKVNPLEWTWVELGVDQTVDVVVCVIYSPGEFYCHVLKEDALKKLNDLNKSLAEHCQQKLPNGFKAEIGQPCCAFFAGDGSWYRALVKEILPNGHVKVHFVDYGNIEEVTADELRMISSTFLNLPFQGIRCQLADIQSRNKHWSEEAITRFQMCVAGIKLQARVVEVTENGIGVELTDLSTCYPRIISDVLIDEHLVLKSASPHKDLPNDRLVNKHELQVHVQGLQATSSAEQWKTIELPVDKTIQANVLEIISPNLFYALPKGMPENQEKLCMLTAELLEYCNAPKSRPPYRPRIGDACCAKYTSDDFWYRAVVLGTSDTDVEVLYADYGNIETLPLCRVQPITSSHLALPFQIIRCSLEGLMELNGSSSQLIIMLLKNFMLNQNVMLSVKGITKNVHTVSVEKCSENGTVDVADKLVTFGLAKNITPQRQSALNTEKMYRMNCCCTELQKQVEKHEHILLFLLNNSTNQNKFIEMKKLLKS.

Disordered stretches follow at residues 1 to 66 (MSVK…KKNN) and 79 to 138 (SQED…RPAK). Over residues 27–41 (NFEKNENKLPPHESL) the composition is skewed to basic and acidic residues. Polar residues-rich tracts occupy residues 79 to 91 (SQED…NPNG) and 110 to 122 (NSVS…SNSP). Zn(2+) is bound by residues C170, C173, C181, C184, C190, C194, H202, and C206. The MYND-type zinc finger occupies 170 to 206 (CHRCGLFGSLRCSQCKQTYYCSTACQRRDWSAHSIVC). Residues 312 to 372 (IPVKGEVCIA…YHLNRNIDLF (61 aa)) form the Tudor 1 domain. Residues 450-469 (SGQDSKKENADQSDPEDVGK) are disordered. 3 Tudor domains span residues 541-600 (YPAI…LLEL), 762-821 (KAEI…FLNL), and 990-1048 (RPRI…HLAL).

Belongs to the TDRD1 family. As to quaternary structure, found in a mRNP complex, at least composed of TDRD1, TDRD6, TDRD7 and DDX4. Interacts with MAEL. Interacts with PIWIL1, PIWIL2 and PIWIL4 (when methylated on arginine residues). Interacts with TDRD12. In terms of tissue distribution, testis and ovary specific. Also expressed in several cancers.

Its subcellular location is the cytoplasm. In terms of biological role, plays a central role during spermatogenesis by participating in the repression transposable elements and preventing their mobilization, which is essential for the germline integrity. Acts via the piRNA metabolic process, which mediates the repression of transposable elements during meiosis by forming complexes composed of piRNAs and Piwi proteins and governs the methylation and subsequent repression of transposons. Required for the localization of Piwi proteins to the meiotic nuage. Involved in the piRNA metabolic process by ensuring the entry of correct transcripts into the normal piRNA pool and limiting the entry of cellular transcripts into the piRNA pathway. May act by allowing the recruitment of piRNA biogenesis or loading factors that ensure the correct entry of transcripts and piRNAs into Piwi proteins. This Homo sapiens (Human) protein is Tudor domain-containing protein 1 (TDRD1).